The primary structure comprises 605 residues: Pyruvate decarboxylase 2 (605 aa).

D68 and H155 together coordinate substrate. The segment at 433-515 (DSWFNCQKLK…FLINNGGYTI (83 aa)) is thiamine pyrophosphate binding. Mg(2+) contacts are provided by D483, N510, and G512. A substrate-binding site is contributed by E516.

Belongs to the TPP enzyme family. In terms of assembly, homotetramer. Requires a metal cation as cofactor. Thiamine diphosphate is required as a cofactor.

The catalysed reaction is a 2-oxocarboxylate + H(+) = an aldehyde + CO2. This is Pyruvate decarboxylase 2 (PDC2) from Oryza sativa subsp. japonica (Rice).